A 591-amino-acid polypeptide reads, in one-letter code: Cineole synthase 1, chloroplastic (591 aa).

A chloroplast-targeting transit peptide spans 1–44; it reads MSSLIMQVVIPKPAKFFHNNLFSLSSKRHRFSTTTTTRGGRWAR. (2E)-geranyl diphosphate contacts are provided by Arg308, Asp345, Asp349, Arg486, and Asp489. Residues Asp345 and Asp349 each contribute to the Mg(2+) site. The short motif at 345-349 is the DDXXD motif element; it reads DDVFD. Mg(2+) is bound by residues Asp489, Thr493, and Glu497.

Belongs to the terpene synthase family. Tpsb subfamily. Monomer. Requires Mg(2+) as cofactor. The cofactor is Mn(2+).

It localises to the plastid. It is found in the chloroplast. The catalysed reaction is (2E)-geranyl diphosphate + H2O = 1,8-cineole + diphosphate. It carries out the reaction (2E)-geranyl diphosphate = alpha-pinene + diphosphate. The enzyme catalyses (2E)-geranyl diphosphate = beta-pinene + diphosphate. It catalyses the reaction (2E)-geranyl diphosphate + H2O = (S)-alpha-terpineol + diphosphate. The catalysed reaction is (2E)-geranyl diphosphate = beta-myrcene + diphosphate. It carries out the reaction (2E)-geranyl diphosphate = sabinene + diphosphate. The protein operates within secondary metabolite biosynthesis; terpenoid biosynthesis. Functionally, monoterpene synthase (TPS) involved in the biosynthesis of monoterpene natural products, components of the chemical defense arsenal. Catalyzes the conversion of (2E)-geranyl diphosphate (GPP) into 1,8-cineole, and, as minor products, alpha-terpineol, beta-pinene, alpha-pinene, sabinene and myrcene. The sequence is that of Cineole synthase 1, chloroplastic from Salvia fruticosa (Greek sage).